The following is a 333-amino-acid chain: tRNA N6-adenosine threonylcarbamoyltransferase (333 aa).

Histidine 111 and histidine 115 together coordinate Fe cation. Residues 134–138 (LASGG), aspartate 167, glycine 180, and asparagine 273 each bind substrate. Aspartate 301 lines the Fe cation pocket.

This sequence belongs to the KAE1 / TsaD family. The cofactor is Fe(2+).

It is found in the cytoplasm. It catalyses the reaction L-threonylcarbamoyladenylate + adenosine(37) in tRNA = N(6)-L-threonylcarbamoyladenosine(37) in tRNA + AMP + H(+). Functionally, required for the formation of a threonylcarbamoyl group on adenosine at position 37 (t(6)A37) in tRNAs that read codons beginning with adenine. Is involved in the transfer of the threonylcarbamoyl moiety of threonylcarbamoyl-AMP (TC-AMP) to the N6 group of A37, together with TsaE and TsaB. TsaD likely plays a direct catalytic role in this reaction. In Desulforapulum autotrophicum (strain ATCC 43914 / DSM 3382 / VKM B-1955 / HRM2) (Desulfobacterium autotrophicum), this protein is tRNA N6-adenosine threonylcarbamoyltransferase.